The chain runs to 351 residues: Nicotinate-nucleotide--dimethylbenzimidazole phosphoribosyltransferase (351 aa).

Catalysis depends on E317, which acts as the Proton acceptor.

It belongs to the CobT family.

It catalyses the reaction 5,6-dimethylbenzimidazole + nicotinate beta-D-ribonucleotide = alpha-ribazole 5'-phosphate + nicotinate + H(+). Its pathway is nucleoside biosynthesis; alpha-ribazole biosynthesis; alpha-ribazole from 5,6-dimethylbenzimidazole: step 1/2. Functionally, catalyzes the synthesis of alpha-ribazole-5'-phosphate from nicotinate mononucleotide (NAMN) and 5,6-dimethylbenzimidazole (DMB). The polypeptide is Nicotinate-nucleotide--dimethylbenzimidazole phosphoribosyltransferase (Pseudomonas aeruginosa (strain ATCC 15692 / DSM 22644 / CIP 104116 / JCM 14847 / LMG 12228 / 1C / PRS 101 / PAO1)).